Reading from the N-terminus, the 92-residue chain is UPF0223 protein SGO_1052 (92 aa).

The protein belongs to the UPF0223 family.

This is UPF0223 protein SGO_1052 from Streptococcus gordonii (strain Challis / ATCC 35105 / BCRC 15272 / CH1 / DL1 / V288).